The chain runs to 302 residues: Oxygen-dependent coproporphyrinogen-III oxidase (302 aa).

Residue S94 coordinates substrate. Residues H98 and H108 each coordinate a divalent metal cation. Residue H108 is the Proton donor of the active site. Residue 110–112 (NVR) coordinates substrate. H147 and H177 together coordinate a divalent metal cation. An important for dimerization region spans residues 242 to 277 (YVEFNLVYDRGTLFGLQTGGRTESILMSMPPLARWE). Position 260–262 (260–262 (GGR)) interacts with substrate.

The protein belongs to the aerobic coproporphyrinogen-III oxidase family. In terms of assembly, homodimer. A divalent metal cation serves as cofactor.

The protein localises to the cytoplasm. The catalysed reaction is coproporphyrinogen III + O2 + 2 H(+) = protoporphyrinogen IX + 2 CO2 + 2 H2O. It participates in porphyrin-containing compound metabolism; protoporphyrin-IX biosynthesis; protoporphyrinogen-IX from coproporphyrinogen-III (O2 route): step 1/1. In terms of biological role, involved in the heme biosynthesis. Catalyzes the aerobic oxidative decarboxylation of propionate groups of rings A and B of coproporphyrinogen-III to yield the vinyl groups in protoporphyrinogen-IX. The chain is Oxygen-dependent coproporphyrinogen-III oxidase from Aeromonas hydrophila subsp. hydrophila (strain ATCC 7966 / DSM 30187 / BCRC 13018 / CCUG 14551 / JCM 1027 / KCTC 2358 / NCIMB 9240 / NCTC 8049).